The following is a 159-amino-acid chain: Small ribosomal subunit protein uS7c (159 aa).

Residues 137-159 are disordered; it reads HAIRKKEETHKMAESNRAXAHYR. A compositionally biased stretch (basic and acidic residues) spans 141–150; that stretch reads KKEETHKMAE.

The protein belongs to the universal ribosomal protein uS7 family. In terms of assembly, part of the 30S ribosomal subunit.

It is found in the plastid. The protein resides in the chloroplast. Functionally, one of the primary rRNA binding proteins, it binds directly to 16S rRNA where it nucleates assembly of the head domain of the 30S subunit. This chain is Small ribosomal subunit protein uS7c (rps7), found in Sciadopitys verticillata (Japanese umbrella-pine).